The chain runs to 66 residues: Cold shock protein CspB (66 aa).

The region spanning Gly4–Val63 is the CSD domain.

Homodimer.

The protein localises to the cytoplasm. Affects cell viability at low temperatures. The protein is Cold shock protein CspB (cspB) of Bacillus caldolyticus.